Consider the following 310-residue polypeptide: Repression factor of MSEs protein 1 (310 aa).

2 disordered regions span residues 83-155 and 192-230; these read TQEV…EANA and DGIRRRSSRISERDKRRSQSRLGSEEDEEGDGHDGDEGE. The segment covering 92-106 has biased composition (low complexity); it reads RNTSSSSSSTRSNSS. Polar residues predominate over residues 107–120; the sequence is ADISDTEYSGENTP. A compositionally biased stretch (basic residues) spans 127–136; the sequence is SRRRRTRSRA. Polar residues predominate over residues 139–155; sequence RENSLPASLPSISEANA. Residues 192–208 show a composition bias toward basic and acidic residues; it reads DGIRRRSSRISERDKRR. Ser215 is subject to Phosphoserine.

In terms of assembly, interacts directly with HST1 and SUM1. Required for the interaction between HST1 and SUM1.

The protein localises to the nucleus. Its function is as follows. Tethering factor required for histone deacetylase HST1-mediated repression. Probably involved in targeting HST1 to a subset of SUM1-regulated genes. The polypeptide is Repression factor of MSEs protein 1 (RFM1) (Saccharomyces cerevisiae (strain ATCC 204508 / S288c) (Baker's yeast)).